The following is a 300-amino-acid chain: Mitochondrial tricarboxylate transporter 1 (300 aa).

Solcar repeat units lie at residues 8–98 (VSPS…FRSM), 107–197 (LSNS…LRDW), and 209–294 (INWL…VVWL). Helical transmembrane passes span 11 to 31 (SVSVVAGATAGAVEGVATFPI), 67 to 87 (PKGLFRGCTAMVVGNAGKAGV), 114 to 134 (LAGMGAGTLEAIFAVTPSETI), 172 to 191 (GVVPVVMRQGSASAIRLGTY), 208 to 228 (LINWLATFSIGAASGVVAVYG), and 277 to 297 (LIVSGGVIFSVYEQVVWLLAG).

Belongs to the mitochondrial carrier (TC 2.A.29) family.

It is found in the mitochondrion membrane. In terms of biological role, mitochondrial tricarboxylate transporter; part of the gene cluster that mediates the biosynthesis of itaconic acid and 2-hydroxyparaconate. Cis-aconitate is secreted by the mitochondrial tricarboxylate transporter MTT1. In the cytosol cis-aconitate is converted into trans-aconitate via isomerization by the aconitate-delta-isomerase ADI1. Decarboxylation of trans-aconitate by the trans-aconitate decarboxylase TAD1 then leads then to the production of itaconic acid. The cytochrome P450 monooxygenase CYP3 further converts itaconate to 2-hydroxyparaconate via oxidation of the double bond, leading to a transient epoxide, which can subsequently be lactonized to produce 2-hydroxyparaconate. Secretion of itaconate and possibly 2-hydroxyparaconate into the medium is mediated by the major facilitator ITP1. The glyoxalase domain-containing protein RDO1 is not involved in the biosynthesis of itaconate and 2-hydroxyparaconate, however, it might play a role in the further conversion of 2-hydroxyparaconate to itatartarate. The sequence is that of Mitochondrial tricarboxylate transporter 1 from Mycosarcoma maydis (Corn smut fungus).